The sequence spans 27 residues: Caerulein precursor fragment R5 (27 aa).

In terms of tissue distribution, expressed by the skin glands.

It localises to the secreted. Antimicrobial peptide. In Xenopus ruwenzoriensis (Uganda clawed frog), this protein is Caerulein precursor fragment R5.